The chain runs to 375 residues: Succinyl-diaminopimelate desuccinylase (375 aa).

A Zn(2+)-binding site is contributed by His66. Residue Asp68 is part of the active site. Asp99 provides a ligand contact to Zn(2+). Glu133 functions as the Proton acceptor in the catalytic mechanism. Residues Glu134, Glu162, and His348 each coordinate Zn(2+).

The protein belongs to the peptidase M20A family. DapE subfamily. Homodimer. It depends on Zn(2+) as a cofactor. Co(2+) is required as a cofactor.

The enzyme catalyses N-succinyl-(2S,6S)-2,6-diaminopimelate + H2O = (2S,6S)-2,6-diaminopimelate + succinate. It functions in the pathway amino-acid biosynthesis; L-lysine biosynthesis via DAP pathway; LL-2,6-diaminopimelate from (S)-tetrahydrodipicolinate (succinylase route): step 3/3. In terms of biological role, catalyzes the hydrolysis of N-succinyl-L,L-diaminopimelic acid (SDAP), forming succinate and LL-2,6-diaminopimelate (DAP), an intermediate involved in the bacterial biosynthesis of lysine and meso-diaminopimelic acid, an essential component of bacterial cell walls. In Citrobacter koseri (strain ATCC BAA-895 / CDC 4225-83 / SGSC4696), this protein is Succinyl-diaminopimelate desuccinylase.